The chain runs to 194 residues: Protein GrpE (194 aa).

Residues 1-12 (MNKQKNNRERTP) are compositionally biased toward basic and acidic residues. Positions 1–44 (MNKQKNNRERTPQPEQDTERDEQLTNSHENDIDSAPAAEENDKV) are disordered.

Belongs to the GrpE family. As to quaternary structure, homodimer.

It is found in the cytoplasm. In terms of biological role, participates actively in the response to hyperosmotic and heat shock by preventing the aggregation of stress-denatured proteins, in association with DnaK and GrpE. It is the nucleotide exchange factor for DnaK and may function as a thermosensor. Unfolded proteins bind initially to DnaJ; upon interaction with the DnaJ-bound protein, DnaK hydrolyzes its bound ATP, resulting in the formation of a stable complex. GrpE releases ADP from DnaK; ATP binding to DnaK triggers the release of the substrate protein, thus completing the reaction cycle. Several rounds of ATP-dependent interactions between DnaJ, DnaK and GrpE are required for fully efficient folding. This chain is Protein GrpE, found in Porphyromonas gingivalis (strain ATCC BAA-308 / W83).